The chain runs to 343 residues: Apolipoprotein L6 (343 aa).

The span at 1–10 shows a compositional bias: basic and acidic residues; sequence MDNQAERESE. Positions 1–24 are disordered; that stretch reads MDNQAERESEAGVGLQRDEDDAPL.

The protein belongs to the apolipoprotein L family. Widely expressed; highly expressed in the uterus, fetal brain and spinal cord, also detected in heart, liver, lung, colon, spleen, thymus, prostate, placenta, adrenal gland, salivary and mammary gland.

It is found in the cytoplasm. Functionally, may affect the movement of lipids in the cytoplasm or allow the binding of lipids to organelles. In Homo sapiens (Human), this protein is Apolipoprotein L6 (APOL6).